The primary structure comprises 136 residues: Ribosome-binding factor A (136 aa).

The tract at residues 1–22 (MNTAGPAGKLAGHAASGPTQRQ) is disordered.

This sequence belongs to the RbfA family. In terms of assembly, monomer. Binds 30S ribosomal subunits, but not 50S ribosomal subunits or 70S ribosomes.

The protein resides in the cytoplasm. In terms of biological role, one of several proteins that assist in the late maturation steps of the functional core of the 30S ribosomal subunit. Associates with free 30S ribosomal subunits (but not with 30S subunits that are part of 70S ribosomes or polysomes). Required for efficient processing of 16S rRNA. May interact with the 5'-terminal helix region of 16S rRNA. The chain is Ribosome-binding factor A from Gluconacetobacter diazotrophicus (strain ATCC 49037 / DSM 5601 / CCUG 37298 / CIP 103539 / LMG 7603 / PAl5).